The chain runs to 1374 residues: MAQTSTYSYTERKRIRKSFGSRDSVLKVPYLLQMQRDAYTAFLQADTAPQKRSNEGLQAAFNSAFPIVSHNGFVEMKFVEYNLAKPAFDVRECQTRGLTFASAVRAKVQLIIYDRESSTSQSKVVKEVKEQEVYMGEVPLMTDKGSFIINGTERVIVSQLHRSPGVFFEHDKGKTHSSGKLLFSARIIPYRGSWLDFEFDPKDILYFRVDRRRKMPVTILLKAIGLNPESILANFFVNDNFRLMDSGAQLEFVPERLRGEVARFDITDKAGKVIVAKDKRVTARHTRELEQSGTTHISVPEDFLIGRVVARNIVDGDTGEILAKANEELTEALLKKLRAAGVQDLQVIYTNELDQGAYISQTLRIDETVDEFAARVAIYRMMRPGEPPTEDAVQALFQRLFYNPDTYDLSRVGRMKFNAKIGRDEATGPMVLSNDDILAVVKILVDLRNGKGEVDDIDHLGNRRVRCVGELAENQYRTGLARIEKAVKERLGQAEQEPLMPHDLINSKPISAALKEFFGASQLSQFMDQTNPLAEITHKRRVSALGPGGLTRERAGFEVRDVHVTHYGRVCPIETPEGPNIGLINSLALYARLNEYGFIETPYRRVVDGKVTMEIDYLSAIEEGKYIIAQANATLDAEGRLTGDLVSAREKGESTLVSADRVQYMDVSPAQIVSVAASLVPFLEHDDANRALMGANMSRQAVPVLRPEKPMVGTGIERVAAVDSGTVVTANRGGVVDYVDATRIVVRVNDDEAVAGEVGVDIYNLIKYQRSNQNTNIHQRPIVKKGDKLAKGDVIADGASTDLGEIAIGQNMLIAFMPWNGYNFEDSILISERVVAEDRYTSIHIEELVVMARDTKLGAEEITRDIPNLSEQQLNRLDESGIIYVGAEVQPGDTLVGKVTPKGETTLTPEEKLLRAIFGEKASDVKDTSLRVDQGSQGTVIDVQVFTREGIQRDKRAQQIIDDELKRFRLDLNDQLRIVEADAFDRIEKLLTGRVANGGPQKLAKGTKIDKAYLASVEKFHWFDIRPAEEEVATQLESIKNALEQTRHSFDLAFEEKRKKLTQGDELPAGVLKMVKVYLAVKRRLQPGDKMAGRHGNKGVVSKIVPVEDMPYMADGTPADIVLNPLGVPSRMNIGQVLEVHLGWAGKGMGQRIGDMLQREAKTAELRKFLEEIYNSRGRKEDLSQLSDDEILAMARELTSGVPFASPVFDGASEEEIKDMLKLAYPDDLAQAKGLTETRTQAYLYDGRTGERFERPTTVGYMHYLKLHHLVDDKMHARSTGPYSLVTQQPLGGKAQFGGQRFGEMEVWALEAYGAAYVLQEMLTVKSDDVQGRTKVYENIVKGEHAIEAGMPESFNVLVKEIRSLGLDIELERS.

It belongs to the RNA polymerase beta chain family. As to quaternary structure, the RNAP catalytic core consists of 2 alpha, 1 beta, 1 beta' and 1 omega subunit. When a sigma factor is associated with the core the holoenzyme is formed, which can initiate transcription.

The catalysed reaction is RNA(n) + a ribonucleoside 5'-triphosphate = RNA(n+1) + diphosphate. DNA-dependent RNA polymerase catalyzes the transcription of DNA into RNA using the four ribonucleoside triphosphates as substrates. The protein is DNA-directed RNA polymerase subunit beta of Acidovorax sp. (strain JS42).